Reading from the N-terminus, the 470-residue chain is Cysteine--tRNA ligase (470 aa).

Residue C28 coordinates Zn(2+). The 'HIGH' region motif lies at 30 to 40 (PTVYNYIHIGN). Zn(2+) contacts are provided by C212, H237, and E241. Residues 271–275 (KMSKS) carry the 'KMSKS' region motif. ATP is bound at residue K274.

The protein belongs to the class-I aminoacyl-tRNA synthetase family. In terms of assembly, monomer. Requires Zn(2+) as cofactor.

The protein resides in the cytoplasm. The catalysed reaction is tRNA(Cys) + L-cysteine + ATP = L-cysteinyl-tRNA(Cys) + AMP + diphosphate. In Lactiplantibacillus plantarum (strain ATCC BAA-793 / NCIMB 8826 / WCFS1) (Lactobacillus plantarum), this protein is Cysteine--tRNA ligase.